Consider the following 39-residue polypeptide: Cytochrome b559 subunit beta (39 aa).

The chain crosses the membrane as a helical span at residues 14–30 (WLAVHGLAVPTVFFLGS). His-18 is a heme binding site.

The protein belongs to the PsbE/PsbF family. As to quaternary structure, heterodimer of an alpha subunit and a beta subunit. PSII is composed of 1 copy each of membrane proteins PsbA, PsbB, PsbC, PsbD, PsbE, PsbF, PsbH, PsbI, PsbJ, PsbK, PsbL, PsbM, PsbT, PsbX, PsbY, PsbZ, Psb30/Ycf12, at least 3 peripheral proteins of the oxygen-evolving complex and a large number of cofactors. It forms dimeric complexes. Heme b is required as a cofactor.

It localises to the plastid. It is found in the chloroplast thylakoid membrane. This b-type cytochrome is tightly associated with the reaction center of photosystem II (PSII). PSII is a light-driven water:plastoquinone oxidoreductase that uses light energy to abstract electrons from H(2)O, generating O(2) and a proton gradient subsequently used for ATP formation. It consists of a core antenna complex that captures photons, and an electron transfer chain that converts photonic excitation into a charge separation. In Adiantum capillus-veneris (Maidenhair fern), this protein is Cytochrome b559 subunit beta.